We begin with the raw amino-acid sequence, 161 residues long: uncharacterized protein (161 aa).

This is an uncharacterized protein from Acidianus convivator (ATV).